A 675-amino-acid polypeptide reads, in one-letter code: TOM1-like protein 9 (675 aa).

The region spanning 9-138 (ATSEMLIGPD…ELLRAGAVFP (130 aa)) is the VHS domain. Disordered stretches follow at residues 144–181 (SAPV…EPEF), 270–322 (LPGT…QLAL), 371–524 (FSDN…YAQM), 542–561 (QNGV…GYQP), and 622–675 (RDQT…AGTM). Residues 180–268 (EFPTLSLSEI…VLTNYEAIAS (89 aa)) form the GAT domain. Composition is skewed to polar residues over residues 299-317 (GDSS…NGVL) and 372-435 (SDNT…GQGV). Over residues 436–451 (SSPWSSQPAQQPVQPS) the composition is skewed to low complexity. Composition is skewed to polar residues over residues 470–481 (QDYSPSAESGSP) and 488–524 (PTQT…YAQM). Basic and acidic residues predominate over residues 646–661 (NKPEDKLFGDLVDISK).

This sequence belongs to the TOM1 family. In terms of assembly, interacts with ELC/VPS23A and ELCL/VPS23B. Ubiquitously expressed.

Its subcellular location is the cytoplasm. The protein resides in the membrane. In terms of biological role, might contribute to the loading of the ESCRT machinery. The chain is TOM1-like protein 9 from Arabidopsis thaliana (Mouse-ear cress).